A 103-amino-acid polypeptide reads, in one-letter code: Large ribosomal subunit protein bL21 (103 aa).

The protein belongs to the bacterial ribosomal protein bL21 family. As to quaternary structure, part of the 50S ribosomal subunit. Contacts protein L20.

Its function is as follows. This protein binds to 23S rRNA in the presence of protein L20. The chain is Large ribosomal subunit protein bL21 from Shewanella frigidimarina (strain NCIMB 400).